The primary structure comprises 634 residues: Growth hormone receptor (634 aa).

The N-terminal stretch at 1–18 (MDLWQLLLTLAVAGSSDA) is a signal peptide. Residues 19–260 (FSGSEATPAF…NPSACEEDFQ (242 aa)) are Extracellular-facing. N-linked (GlcNAc...) asparagine glycosylation is present at N46. C56 and C66 form a disulfide bridge. Residue N73 is glycosylated (N-linked (GlcNAc...) asparagine). C97 and C108 form a disulfide bridge. N111 is a glycosylation site (N-linked (GlcNAc...) asparagine). A disulfide bond links C122 and C136. Positions 147–250 (PPVGLNWTLL…EVLLITFPQM (104 aa)) constitute a Fibronectin type-III domain. N-linked (GlcNAc...) asparagine glycans are attached at residues N152, N157, and N196. The WSXWS motif signature appears at 236–240 (YGKFS). Residues 261-284 (FPWFLIIIFGILGLTVTLFLLIFS) traverse the membrane as a helical segment. The Cytoplasmic portion of the chain corresponds to 285–634 (KQQRIKMLIL…STDQLNKIMP (350 aa)). Residues 290–375 (KMLILPPVPV…HEKSLSIFGA (86 aa)) form a required for JAK2 binding region. Positions 293-301 (ILPPVPVPK) match the Box 1 motif motif. The short motif at 336–345 (DSWVEFIELD) is the UbE motif element. Residue S337 is modified to Phosphoserine. A disordered region spans residues 451–471 (KPRPLPIGGTESTHQAVHTQL). A compositionally biased stretch (polar residues) spans 460 to 471 (TESTHQAVHTQL). Phosphotyrosine occurs at positions 483 and 591.

It belongs to the type I cytokine receptor family. Type 1 subfamily. As to quaternary structure, on growth hormone (GH) binding, forms homodimers and binds JAK2 via a box 1-containing domain. Post-translationally, the soluble form (GHBP) is produced by phorbol ester-promoted proteolytic cleavage at the cell surface (shedding) by ADAM17/TACE. Shedding is inhibited by growth hormone (GH) binding to the receptor probably due to a conformational change in GHR rendering the receptor inaccessible to ADAM17. On GH binding, phosphorylated on tyrosine residues in the cytoplasmic domain by JAK2. In terms of processing, ubiquitinated by the ECS(SOCS2) complex following ligand-binding and phosphorylation by JAK2, leading to its degradation by the proteasome. Regulation by the ECS(SOCS2) complex acts as a negative feedback loop of growth hormone receptor signaling. Ubiquitination is not sufficient for GHR internalization.

It is found in the cell membrane. It localises to the secreted. Receptor for pituitary gland growth hormone (GH1) involved in regulating postnatal body growth. On ligand binding, couples to the JAK2/STAT5 pathway. Functionally, the soluble form (GHBP) acts as a reservoir of growth hormone in plasma and may be a modulator/inhibitor of GH signaling. In Ovis aries (Sheep), this protein is Growth hormone receptor (GHR).